The primary structure comprises 309 residues: Homoserine kinase (309 aa).

Residue 91 to 101 (PIGSGLGSSAC) coordinates ATP.

This sequence belongs to the GHMP kinase family. Homoserine kinase subfamily.

It localises to the cytoplasm. It carries out the reaction L-homoserine + ATP = O-phospho-L-homoserine + ADP + H(+). It participates in amino-acid biosynthesis; L-threonine biosynthesis; L-threonine from L-aspartate: step 4/5. In terms of biological role, catalyzes the ATP-dependent phosphorylation of L-homoserine to L-homoserine phosphate. This Klebsiella pneumoniae subsp. pneumoniae (strain ATCC 700721 / MGH 78578) protein is Homoserine kinase.